The primary structure comprises 427 residues: Enolase (427 aa).

Q163 lines the (2R)-2-phosphoglycerate pocket. E205 (proton donor) is an active-site residue. The Mg(2+) site is built by D242, E285, and D312. (2R)-2-phosphoglycerate contacts are provided by K337, R366, S367, and K388. K337 serves as the catalytic Proton acceptor.

Belongs to the enolase family. The cofactor is Mg(2+).

The protein localises to the cytoplasm. Its subcellular location is the secreted. The protein resides in the cell surface. It carries out the reaction (2R)-2-phosphoglycerate = phosphoenolpyruvate + H2O. It participates in carbohydrate degradation; glycolysis; pyruvate from D-glyceraldehyde 3-phosphate: step 4/5. In terms of biological role, catalyzes the reversible conversion of 2-phosphoglycerate (2-PG) into phosphoenolpyruvate (PEP). It is essential for the degradation of carbohydrates via glycolysis. This Laribacter hongkongensis (strain HLHK9) protein is Enolase.